The following is a 368-amino-acid chain: F-box/kelch-repeat protein At2g44700 (368 aa).

Residues 1–23 (MSSSNEPPRKTDQPSSSSASASA) are disordered. A compositionally biased stretch (low complexity) spans 14-23 (PSSSSASASA). In terms of domain architecture, F-box spans 25–71 (PSLFLSLPLEIISMILARVPKRYYPILCSVSKNMRSLVRSPEIHKAR). Residues 177–221 (KVYVIGGYQDDEIAAESFDLNTQTWEAAPIPDEKESHRWICKANV) form a Kelch repeat.

The chain is F-box/kelch-repeat protein At2g44700 from Arabidopsis thaliana (Mouse-ear cress).